The sequence spans 554 residues: MSEAEARPTNFIRQIIDEDLASGKHTTVHTRFPPEPNGYLHIGHAKSICLNFGIAQDYKGQCNLRFDDTNPVKEDIEYVDSIKNDVEWLGFHWSGNVRYSSDYFDQLHAYAIELINKGLAYVDELTPEQIREYRGTLTQPGKNSPYRDRSVEENLALFEKMRTGGFEEGKACLRAKIDMASPFIVMRDPVLYRIKFAEHHQTGNKWCIYPMYDFTHCISDALEGITHSLCTLEFQDNRRLYDWVLDNITIPVHPRQYEFSRLNLEYTVMSKRKLNLLVTDKHVEGWDDPRMPTISGLRRRGYTAASIREFCKRIGVTKQDNTIEMASLESCIREDLNENAPRAMAVIDPVKLVIENYQGEGEMVTMPNHPNKPEMGSRQVPFSGEIWIDRADFREEANKQYKRLVLGKEVRLRNAYVIKAERVEKDAEGNITTIFCTYDADTLSKDPADGRKVKGVIHWVSAAHALPVEIRLYDRLFSVPNPGAADDFLSVINPESLVIKQGFAEPSLKDAVAGKAFQFEREGYFCLDSRHSTAEKPVFNRTVGLRDTWAKVGE.

The 'HIGH' region signature appears at 34–44; the sequence is PEPNGYLHIGH. ATP-binding positions include 35–37 and 41–47; these read EPN and HIGHAKS. L-glutamine-binding residues include aspartate 67 and tyrosine 212. ATP-binding positions include threonine 231, 261 to 262, and 269 to 271; these read RL and MSK. The 'KMSKS' region motif lies at 268–272; that stretch reads VMSKR. Residues 317 to 324 are interaction with tRNA; sequence TKQDNTIE.

It belongs to the class-I aminoacyl-tRNA synthetase family. In terms of assembly, monomer.

It is found in the cytoplasm. The catalysed reaction is tRNA(Gln) + L-glutamine + ATP = L-glutaminyl-tRNA(Gln) + AMP + diphosphate. In Escherichia coli O127:H6 (strain E2348/69 / EPEC), this protein is Glutamine--tRNA ligase.